The following is a 103-amino-acid chain: MITKDKIRVRLFSFDVKILDQSAESIVRAVQKSKAQIKGPIPLPTKIKKYTVLRSPHVNKKSREQFEMRTHKRLIDILEPTSALMDSLMKLELPAGVEVDIKQ.

It belongs to the universal ribosomal protein uS10 family. In terms of assembly, part of the 30S ribosomal subunit.

Involved in the binding of tRNA to the ribosomes. The protein is Small ribosomal subunit protein uS10 of Borrelia duttonii (strain Ly).